The sequence spans 179 residues: Serglycin (179 aa).

The first 26 residues, 1–26 (MRQVPVGTRLVLALAFVLVWGSSVQG), serve as a signal peptide directing secretion. Positions 27 to 75 (YPARRARYQWVRCKPDGIFANCIEEKGPRFDLIAEESNVGPPMTDPVLM) are cleaved as a propeptide — activation peptide. A disulfide bridge links C39 with C48. Residues 86-145 (SDDYSGSGSGSGSGSGSGSGSGSGSGSGSGSGSGSGSGSGSGSGSGSGSGSGSLADMEWE) form a disordered region. O-linked (Xyl...) (glycosaminoglycan) serine glycosylation is found at S90 and S92. Tandem repeats lie at residues 90–91 (SG), 92–93 (SG), 94–95 (SG), 96–97 (SG), 98–99 (SG), 100–101 (SG), 102–103 (SG), 104–105 (SG), 106–107 (SG), 108–109 (SG), 110–111 (SG), 112–113 (SG), 114–115 (SG), 116–117 (SG), 118–119 (SG), 120–121 (SG), 122–123 (SG), 124–125 (SG), 126–127 (SG), 128–129 (SG), 130–131 (SG), 132–133 (SG), 134–135 (SG), and 136–137 (SG). The interval 90–137 (SGSGSGSGSGSGSGSGSGSGSGSGSGSGSGSGSGSGSGSGSGSGSGSG) is 24 X 2 AA tandem repeats of S-G. Positions 92 to 136 (SGSGSGSGSGSGSGSGSGSGSGSGSGSGSGSGSGSGSGSGSGSGS) are enriched in gly residues. S96, S98, S100, S102, S104, and S106 each carry an O-linked (Xyl...) (glycosaminoglycan) serine glycan.

This sequence belongs to the serglycin family. Binds to activated CD44 and to GZMB. O-glycosylated; contains chondroitin sulfate and heparan sulfate.

The protein resides in the cytoplasmic granule. The protein localises to the cytolytic granule. It is found in the secreted. Its subcellular location is the extracellular space. It localises to the golgi apparatus. Plays a role in formation of mast cell secretory granules and mediates storage of various compounds in secretory vesicles. Required for storage of some proteases in both connective tissue and mucosal mast cells and for storage of granzyme B in T-lymphocytes. Plays a role in localizing neutrophil elastase in azurophil granules of neutrophils. Mediates processing of MMP2. Plays a role in cytotoxic cell granule-mediated apoptosis by forming a complex with granzyme B which is delivered to cells by perforin to induce apoptosis. Regulates the secretion of TNF-alpha and may also regulate protease secretion. Inhibits bone mineralization. The protein is Serglycin (Srgn) of Rattus norvegicus (Rat).